The primary structure comprises 347 residues: Phenylalanine--tRNA ligase alpha subunit (347 aa).

Residues 83-111 (QNLSGGDDSGADPTFDPTLPGTRPSLGHI) form a disordered region. Residue glutamate 274 participates in Mg(2+) binding.

This sequence belongs to the class-II aminoacyl-tRNA synthetase family. Phe-tRNA synthetase alpha subunit type 1 subfamily. In terms of assembly, tetramer of two alpha and two beta subunits. Mg(2+) is required as a cofactor.

The protein resides in the cytoplasm. It carries out the reaction tRNA(Phe) + L-phenylalanine + ATP = L-phenylalanyl-tRNA(Phe) + AMP + diphosphate + H(+). The sequence is that of Phenylalanine--tRNA ligase alpha subunit from Rhodopirellula baltica (strain DSM 10527 / NCIMB 13988 / SH1).